The sequence spans 438 residues: EF-hand calcium-binding domain-containing protein 3 (438 aa).

EF-hand domains are found at residues Ser-47 to Asn-82 and Leu-83 to Phe-118. Residues Asp-96, Asp-98, Asp-100, Lys-102, and Asp-107 each contribute to the Ca(2+) site. At Tyr-279 the chain carries Phosphotyrosine. Positions Ser-413–Gln-438 are disordered. Over residues Arg-426–Gln-438 the composition is skewed to basic residues.

This is EF-hand calcium-binding domain-containing protein 3 (EFCAB3) from Bos taurus (Bovine).